The primary structure comprises 269 residues: Adenosylcobinamide-GDP ribazoletransferase (269 aa).

The next 5 membrane-spanning stretches (helical) occupy residues 8 to 28, 41 to 61, 70 to 90, 114 to 136, and 196 to 216; these read QFNL…PTAI, YFPL…CFML, VCLL…DGLA, IGTY…LSSL, and VPAV…SACV.

This sequence belongs to the CobS family. It depends on Mg(2+) as a cofactor.

It localises to the cell inner membrane. The enzyme catalyses alpha-ribazole + adenosylcob(III)inamide-GDP = adenosylcob(III)alamin + GMP + H(+). It catalyses the reaction alpha-ribazole 5'-phosphate + adenosylcob(III)inamide-GDP = adenosylcob(III)alamin 5'-phosphate + GMP + H(+). It functions in the pathway cofactor biosynthesis; adenosylcobalamin biosynthesis; adenosylcobalamin from cob(II)yrinate a,c-diamide: step 7/7. In terms of biological role, joins adenosylcobinamide-GDP and alpha-ribazole to generate adenosylcobalamin (Ado-cobalamin). Also synthesizes adenosylcobalamin 5'-phosphate from adenosylcobinamide-GDP and alpha-ribazole 5'-phosphate. The sequence is that of Adenosylcobinamide-GDP ribazoletransferase from Pseudoalteromonas atlantica (strain T6c / ATCC BAA-1087).